The primary structure comprises 197 residues: Guanylate kinase (197 aa).

In terms of domain architecture, Guanylate kinase-like spans 9 to 188 (GRLVVFSAPS…AVEAVILAIS (180 aa)). Residue 16 to 23 (APSGTGKS) coordinates ATP.

The protein belongs to the guanylate kinase family.

It localises to the cytoplasm. It carries out the reaction GMP + ATP = GDP + ADP. Essential for recycling GMP and indirectly, cGMP. This is Guanylate kinase from Chlorobium luteolum (strain DSM 273 / BCRC 81028 / 2530) (Pelodictyon luteolum).